We begin with the raw amino-acid sequence, 440 residues long: Transposon Ty1-ML1 Gag polyprotein (440 aa).

Composition is skewed to polar residues over residues 1–23 (MESQ…SVTS), 48–60 (TKAN…TPAS), and 127–152 (QSQF…GNTF). Disordered stretches follow at residues 1–88 (MESQ…YPQQ), 126–173 (PQSQ…RPPP), and 352–440 (GSRN…PETY). Positions 153–165 (TDSSSADSDMTST) are enriched in low complexity. Residues 299–401 (NNGIHINNKV…NSKSKTARAH (103 aa)) form an RNA-binding region. The segment covering 402–418 (NVSTSNNSPSTDNDSIS) has biased composition (low complexity). A Phosphoserine modification is found at serine 416. Residues 419 to 428 (KSTTEPIQLN) show a composition bias toward polar residues. Over residues 429–440 (NKHDLHLRPETY) the composition is skewed to basic and acidic residues.

As to quaternary structure, homotrimer.

It localises to the cytoplasm. Its function is as follows. Capsid protein (CA) is the structural component of the virus-like particle (VLP), forming the shell that encapsulates the retrotransposons dimeric RNA genome. The particles are assembled from trimer-clustered units and there are holes in the capsid shells that allow for the diffusion of macromolecules. CA also has nucleocapsid-like chaperone activity, promoting primer tRNA(i)-Met annealing to the multipartite primer-binding site (PBS), dimerization of Ty1 RNA and initiation of reverse transcription. This chain is Transposon Ty1-ML1 Gag polyprotein (TY1A-ML1), found in Saccharomyces cerevisiae (strain ATCC 204508 / S288c) (Baker's yeast).